The following is an 862-amino-acid chain: MAERGRLGLPGAPGALNTPVPMNLFATWEVDGSSPSCVPRLCSLTLKKLAVLRELEKELLSVVIAVKMQYPHFLKREGNKLQIMLQRRKRYKNRTILGYKTLAAGSINMAEVMQHPSEGGQVLSLCSSIKEASVKVAEIWIVSLSSQPIDHEDSAMQAGPKTKSTDNYSEEEYESFSSEQEASDDAVQGQDLDEDDFDVGKPKKQRRSIVRTTSMTRQQNFKQKVVALLRRFKVSEEVLDSEQDPAEHVPEVEEDLDLLYDTLDVENPSDSGPDMDDDDSVLSTPKPKLRPYFEGLSHSSSQTEIGSIHSARSHREPPSPADVPEKTRSLGGKQQLSDSVSDTVALSAAVPREPSGQPEDSPEAETSTLDVFTEKLPPSGRIIKTESLVIPSTRSESKPAGRRGRSTSLKERQPARPQNERANSLDNERCPDTRSQLQIPRKTVYDQLNHILISDDQLPENIILVNTSDWQGQFLSDVLQKHTLPVVCTCSAADVQAAFSTIVSRIQRYCNCNSQPPTPVKIAVAGAQHYLSAILRLFVEQLSHKTPDWLGYMRFLIIPLGSHPVARYLGSVDYRYNNFFQDLAWRDLFNKLEAQSSVQDTPDIVSRITQYISGANCAHQLPIAEAMLTYKQKSPDEESSQRFIPFVGVVKVGIVEPSSATSGDSDDAAPSSSSILSSTPPSASTSPAAKEASPTPPSSPSVSGGLSSPSQGVGAELMGLQVDYWTAAQPADRKRDAEKKDMPTTKNTLKCTFRSLQVSRLPSSGEAAATPTMSMTVVTKEKNKKVMFLPKKTKDKEVESKSQCIEGISRLICTAKHQQNMLRVLIDGVECSDVKFFQLAAQWSSHVKHFPICIFGHSKATF.

3 disordered regions span residues 151–215 (HEDS…TTSM), 263–436 (LDVE…TRSQ), and 658–713 (SSAT…SQGV). The span at 263–272 (LDVENPSDSG) shows a compositional bias: low complexity. Basic and acidic residues predominate over residues 313-328 (SHREPPSPADVPEKTR). Polar residues predominate over residues 332 to 344 (GKQQLSDSVSDTV). Phosphoserine occurs at positions 361, 387, 424, 662, and 665. 2 stretches are compositionally biased toward low complexity: residues 658 to 693 (SSAT…KEAS) and 700 to 710 (PSVSGGLSSPS).

The protein belongs to the PACS family. In terms of assembly, interacts with BID and PKD2. Interacts with SIRT1. Interacts with HDAC1. Interacts with TRPV1. Interacts with WDR37.

The protein localises to the endoplasmic reticulum. The protein resides in the mitochondrion. Functionally, multifunctional sorting protein that controls the endoplasmic reticulum (ER)-mitochondria communication, including the apposition of mitochondria with the ER and ER homeostasis. In addition, in response to apoptotic inducer, translocates BIB to mitochondria, which initiates a sequence of events including the formation of mitochondrial truncated BID, the release of cytochrome c, the activation of caspase-3 thereby causing cell death. May also involved in ion channel trafficking, directing acidic cluster-containing ion channels to distinct subcellular compartments. The polypeptide is Phosphofurin acidic cluster sorting protein 2 (Pacs2) (Mus musculus (Mouse)).